Reading from the N-terminus, the 834-residue chain is Probable receptor-like protein kinase At2g23200 (834 aa).

Positions 1-28 (MENFCFQDSVSLFITIMVLVLLPRLSLS) are cleaved as a signal peptide. Residues 29-405 (DTSTYTRPEN…SSSRVHIITG (377 aa)) lie on the Extracellular side of the membrane. N-linked (GlcNAc...) asparagine glycans are attached at residues N61, N149, N221, N246, N277, N289, N314, N352, N361, and N394. A helical membrane pass occupies residues 406-426 (CAVAAAAASALVFSLLFMVFL). The Cytoplasmic segment spans residues 427-834 (KRRRSKKTKP…FSQLKISDAR (408 aa)). The 274-residue stretch at 488–761 (FDEQLLIGKG…RDVIWDLEYV (274 aa)) folds into the Protein kinase domain. Residues 494 to 502 (IGKGGFGYV) and K516 contribute to the ATP site. The Proton acceptor role is filled by D613.

It belongs to the protein kinase superfamily. Ser/Thr protein kinase family.

The protein resides in the membrane. In Arabidopsis thaliana (Mouse-ear cress), this protein is Probable receptor-like protein kinase At2g23200.